A 544-amino-acid polypeptide reads, in one-letter code: Methionine--tRNA ligase (544 aa).

Positions 10–20 (PYANGSLHLGH) match the 'HIGH' region motif. Residues Cys141, Cys144, Cys153, and Cys156 each contribute to the Zn(2+) site. The 'KMSKS' region signature appears at 329–333 (KLSTS). Thr332 contributes to the ATP binding site.

This sequence belongs to the class-I aminoacyl-tRNA synthetase family. MetG type 1 subfamily. Monomer. Requires Zn(2+) as cofactor.

It is found in the cytoplasm. The catalysed reaction is tRNA(Met) + L-methionine + ATP = L-methionyl-tRNA(Met) + AMP + diphosphate. Functionally, is required not only for elongation of protein synthesis but also for the initiation of all mRNA translation through initiator tRNA(fMet) aminoacylation. The protein is Methionine--tRNA ligase of Bacillus cereus (strain 03BB102).